The primary structure comprises 420 residues: L-rhamnose isomerase (420 aa).

The Mn(2+) site is built by His-264, Asp-296, and Asp-298.

The protein belongs to the rhamnose isomerase family. It depends on Mn(2+) as a cofactor.

It localises to the cytoplasm. The catalysed reaction is L-rhamnopyranose = L-rhamnulose. The protein operates within carbohydrate degradation; L-rhamnose degradation; glycerone phosphate from L-rhamnose: step 1/3. Catalyzes the interconversion of L-rhamnose and L-rhamnulose. This Listeria monocytogenes serotype 4b (strain F2365) protein is L-rhamnose isomerase.